A 224-amino-acid chain; its full sequence is Artemin (224 aa).

An N-terminal signal peptide occupies residues 1–39; it reads MELGLAEPTALSHCLRPRWQSAWWPTLAVLALLSCVTEA. Positions 40-111 are excised as a propeptide; sequence SLDPMSRSPA…AALRGARAAR (72 aa). Positions 43-124 are disordered; the sequence is PMSRSPAARD…RSSRARTTDA (82 aa). The segment covering 80–95 has biased composition (pro residues); that stretch reads RPPPQSPQPAPPPPGP. The segment covering 96–116 has biased composition (low complexity); sequence ALQSPPAALRGARAARAGTRS. Disulfide bonds link Cys127–Cys192, Cys154–Cys220, and Cys158–Cys222. Residue Asn206 is glycosylated (N-linked (GlcNAc...) asparagine).

The protein belongs to the TGF-beta family. GDNF subfamily. In terms of assembly, homodimer; disulfide-linked. Interacts with GFRA3 coreceptor and RET: forms a 2:2:2 ternary complex composed of ARTN ligand, GFRA3 and RET receptor.

It is found in the secreted. In terms of biological role, growth factor that supports the survival of sensory and sympathetic peripheral neurons in culture and also supports the survival of dopaminergic neurons of the ventral mid-brain. Acts by binding to its coreceptor, GFRA3, leading to autophosphorylation and activation of the RET receptor. Strong attractant of gut hematopoietic cells thus promoting the formation Peyer's patch-like structures, a major component of the gut-associated lymphoid tissue. The polypeptide is Artemin (Mus musculus (Mouse)).